The primary structure comprises 318 residues: NADH-ubiquinone oxidoreductase chain 1 (318 aa).

The next 8 helical transmembrane spans lie at 2–22, 70–90, 102–122, 147–167, 171–191, 222–242, 253–273, and 294–314; these read FLTN…FLTL, MFLM…IPLP, LLFM…SGWA, AIIL…TLII, YMWL…STLA, LFFL…TILF, ELYT…FLWI, and LPLT…TAAI.

This sequence belongs to the complex I subunit 1 family.

Its subcellular location is the mitochondrion inner membrane. It carries out the reaction a ubiquinone + NADH + 5 H(+)(in) = a ubiquinol + NAD(+) + 4 H(+)(out). Its function is as follows. Core subunit of the mitochondrial membrane respiratory chain NADH dehydrogenase (Complex I) that is believed to belong to the minimal assembly required for catalysis. Complex I functions in the transfer of electrons from NADH to the respiratory chain. The immediate electron acceptor for the enzyme is believed to be ubiquinone. This Diaemus youngi (White-winged vampire bat) protein is NADH-ubiquinone oxidoreductase chain 1 (MT-ND1).